The chain runs to 105 residues: Small ribosomal subunit protein uS10 (105 aa).

Belongs to the universal ribosomal protein uS10 family. Part of the 30S ribosomal subunit.

Involved in the binding of tRNA to the ribosomes. This is Small ribosomal subunit protein uS10 from Synechococcus sp. (strain JA-2-3B'a(2-13)) (Cyanobacteria bacterium Yellowstone B-Prime).